The primary structure comprises 397 residues: (S)-8-oxocitronellyl enol synthase ISY2 (397 aa).

Residues 36–38 (TGL), 64–65 (RR), 82–83 (DV), 106–107 (TW), Gln144, Tyr180, Ile207, and 214–216 (SMM) contribute to the NADP(+) site. Residue Tyr180 is part of the active site.

This sequence belongs to the short-chain dehydrogenases/reductases (SDR) family.

The enzyme catalyses (S)-8-oxocitronellyl enol + NADP(+) = (6E)-8-oxogeranial + NADPH + H(+). It carries out the reaction (S)-8-oxocitronellyl enol + NAD(+) = (6E)-8-oxogeranial + NADH + H(+). Iridoid synthase that catalyzes the first step in generation of the iridoid ring scaffold using the linear monoterpene (6E)-8-oxogeranial as substrate. Iridoids comprise a large family of distinctive bicyclic monoterpenes that possess a wide range of pharmacological activities, including anticancer, anti-inflammatory, antifungal and antibacterial activities. Catalyzes the conversion of the linear monoterpene (6E)-8-oxogeranial to (S)-8-oxocitronellyl enol, a precursor of nepetalactones, which are metabolites that are both insect-repellent and have euphoric effect in cats. This chain is (S)-8-oxocitronellyl enol synthase ISY2, found in Nepeta cataria (Catnip).